Consider the following 48-residue polypeptide: Large ribosomal subunit protein bL33A (48 aa).

Belongs to the bacterial ribosomal protein bL33 family.

The chain is Large ribosomal subunit protein bL33A from Streptococcus agalactiae serotype V (strain ATCC BAA-611 / 2603 V/R).